The sequence spans 633 residues: MSETPRIQLLSPRLANQIAAGEVVERPASVAKELLENSLDAGSRRIDVEVEQGGIKLLRVRDDGRGIPADDLPLALARHATSKIRELEDLERVMSLGFRGEALASISSVARLTMTSRTADAGEAWQVETEGRDMQPRVQPAAHPVGTSVEVRDLFFNTPARRKFLRAEKTEFDHLQEVIKRLALARFDVAFHLRHNGKTIFALHEARDELARARRVGAVCGQAFLEQALPIEVERNGLHLWGWVGLPTFSRSQPDLQYFYVNGRMVRDKLVAHAVRQAYRDVLYNGRHPTFVLFFEVDPAVVDVNVHPTKHEVRFRDSRMVHDFLYGTLHRALGEVRPDDQLAPPGATSLTEPRPTGAAAGEFGPQGEMRLAESVLESPAARVGWSGGSSASGGSSGYSAYTRPEAPPSLAEAGGAYKAYFAPLPAGEAPAALPESAQDIPPLGYALAQLKGIYILAENAHGLVLVDMHAAHERITYERLKVAMASEGLRGQPLLVPESIAVSEREADCAEEHSSWFQRLGFELQRLGPESLAIRQIPALLKQAEATQLVRDVIADLLEYGTSDRIQAHLNELLGTMACHGAVRANRRLTLPEMNALLRDMEITERSGQCNHGRPTWTQLGLDELDKLFLRGR.

Disordered stretches follow at residues 337-364 and 383-405; these read RPDD…GEFG and VGWS…TRPE. Residues 385–396 show a composition bias toward gly residues; the sequence is WSGGSSASGGSS.

This sequence belongs to the DNA mismatch repair MutL/HexB family.

This protein is involved in the repair of mismatches in DNA. It is required for dam-dependent methyl-directed DNA mismatch repair. May act as a 'molecular matchmaker', a protein that promotes the formation of a stable complex between two or more DNA-binding proteins in an ATP-dependent manner without itself being part of a final effector complex. The chain is DNA mismatch repair protein MutL from Pseudomonas aeruginosa (strain UCBPP-PA14).